Consider the following 529-residue polypeptide: V-set and immunoglobulin domain-containing protein 10 (529 aa).

An N-terminal signal peptide occupies residues 1 to 18; the sequence is MMITSAVVLYLLLLSHQT. 2 Ig-like C2-type domains span residues 19 to 110 and 129 to 217; these read VSEE…QTLS and PATF…QELL. At 21 to 411 the chain is on the extracellular side; that stretch reads EEQVQQFVIG…LNVKTSAGNG (391 aa). 13 N-linked (GlcNAc...) asparagine glycosylation sites follow: N34, N35, N46, N135, N147, N159, N211, N269, N280, N284, N330, N357, and N376. Cysteines 40 and 96 form a disulfide. An intrachain disulfide couples C150 to C199. Residues 317 to 403 enclose the Ig-like C2-type 3 domain; it reads PTGQPLATAL…GARELEVYLN (87 aa). C335 and C387 form a disulfide bridge. The chain crosses the membrane as a helical span at residues 412 to 432; sequence GAIVGIFVSVLVMMIGIVVGV. Topologically, residues 433–529 are cytoplasmic; the sequence is TVYTKRDRIC…PQRAELQPAV (97 aa).

The protein resides in the membrane. This is V-set and immunoglobulin domain-containing protein 10 (vsig10) from Danio rerio (Zebrafish).